The sequence spans 666 residues: DNA mismatch repair protein MutL (666 aa).

It belongs to the DNA mismatch repair MutL/HexB family.

In terms of biological role, this protein is involved in the repair of mismatches in DNA. It is required for dam-dependent methyl-directed DNA mismatch repair. May act as a 'molecular matchmaker', a protein that promotes the formation of a stable complex between two or more DNA-binding proteins in an ATP-dependent manner without itself being part of a final effector complex. In Clostridium botulinum (strain Loch Maree / Type A3), this protein is DNA mismatch repair protein MutL.